A 139-amino-acid polypeptide reads, in one-letter code: AP-4 complex subunit sigma (139 aa).

The protein belongs to the adaptor complexes small subunit family. As to quaternary structure, may be part of the adaptor protein complex 4 (AP-4), a heterotetramer composed of two large adaptins (epsilon-type subunitand beta-type subunit), a medium adaptin (mu-type subunit) and a small adaptin (sigma-type).

It localises to the golgi apparatus. It is found in the trans-Golgi network membrane. Functionally, probable component of an adaptor protein complex. Adaptor protein complexes are vesicle coat components involved both in vesicle formation and cargo selection. They control the vesicular transport of proteins in different trafficking pathways. In Dictyostelium discoideum (Social amoeba), this protein is AP-4 complex subunit sigma.